The sequence spans 100 residues: Aspartyl/glutamyl-tRNA(Asn/Gln) amidotransferase subunit C (100 aa).

Belongs to the GatC family. In terms of assembly, heterotrimer of A, B and C subunits.

The catalysed reaction is L-glutamyl-tRNA(Gln) + L-glutamine + ATP + H2O = L-glutaminyl-tRNA(Gln) + L-glutamate + ADP + phosphate + H(+). It catalyses the reaction L-aspartyl-tRNA(Asn) + L-glutamine + ATP + H2O = L-asparaginyl-tRNA(Asn) + L-glutamate + ADP + phosphate + 2 H(+). Allows the formation of correctly charged Asn-tRNA(Asn) or Gln-tRNA(Gln) through the transamidation of misacylated Asp-tRNA(Asn) or Glu-tRNA(Gln) in organisms which lack either or both of asparaginyl-tRNA or glutaminyl-tRNA synthetases. The reaction takes place in the presence of glutamine and ATP through an activated phospho-Asp-tRNA(Asn) or phospho-Glu-tRNA(Gln). This chain is Aspartyl/glutamyl-tRNA(Asn/Gln) amidotransferase subunit C, found in Staphylococcus saprophyticus subsp. saprophyticus (strain ATCC 15305 / DSM 20229 / NCIMB 8711 / NCTC 7292 / S-41).